The primary structure comprises 293 residues: Phosphatidate cytidylyltransferase (293 aa).

8 consecutive transmembrane segments (helical) span residues 6–26, 51–71, 73–93, 97–117, 157–177, 195–215, 218–238, and 273–293; these read IISAVIGIALAFSLLILGGWY, IAPAAKTTMVLSLMLLLSATV, PHLTDAFFPLTGALICFYLLF, MATIADISTSLLGLFYGGYLP, LLVTILAFACIWAADIGAYIM, VEGSLWGVGGSLLVGVLGAWY, WPYWEITGALLGLLIGIVSLL, and VFTAPLVYYFVVLLLPVLNNL.

This sequence belongs to the CDS family.

It localises to the cell membrane. It catalyses the reaction a 1,2-diacyl-sn-glycero-3-phosphate + CTP + H(+) = a CDP-1,2-diacyl-sn-glycerol + diphosphate. The protein operates within phospholipid metabolism; CDP-diacylglycerol biosynthesis; CDP-diacylglycerol from sn-glycerol 3-phosphate: step 3/3. The sequence is that of Phosphatidate cytidylyltransferase (cdsA) from Synechocystis sp. (strain ATCC 27184 / PCC 6803 / Kazusa).